We begin with the raw amino-acid sequence, 430 residues long: Divergent protein kinase domain 2A (430 aa).

The N-terminal stretch at 1–35 (MWRLVPPKLGRLSRSLKLAALGSLLVLMVLHSPSL) is a signal peptide.

Belongs to the DIPK family.

The protein localises to the cytoplasmic vesicle. It is found in the COPI-coated vesicle. The protein resides in the golgi apparatus. It localises to the secreted. May play a role in cardiomyocyte proliferation through paracrine signaling and activation of the PPI3K-AKT-CDK7 signaling cascade. The polypeptide is Divergent protein kinase domain 2A (Homo sapiens (Human)).